The chain runs to 109 residues: Transmembrane protein 233 (109 aa).

The tract at residues Met-1–Asp-30 is disordered. The Cytoplasmic portion of the chain corresponds to Met-1–Thr-41. Acidic residues predominate over residues Asn-21–Asp-30. The segment at residues Ile-42–Met-62 is an intramembrane region (helical). The Cytoplasmic portion of the chain corresponds to Ser-63 to Trp-84. A helical membrane pass occupies residues Val-85–Phe-105. The Extracellular portion of the chain corresponds to Thr-106–Ala-109.

The protein belongs to the CD225/Dispanin family. In terms of assembly, interacts with the giant stinging tree toxin ExTxA (AC P0DQP3). Interacts with Nav1.7/SCN9A. Interacts with Nav1.1/SCN1A, Nav1.2/SCN2A, Nav1.3/SCN3A, Nav1.4/SCN4A, Nav1.5/SCN5A, and Nav1.6/SCN8A.

The protein resides in the cell membrane. Probable accessory protein of voltage-gated sodium channels. The protein is Transmembrane protein 233 of Homo sapiens (Human).